The sequence spans 794 residues: Phosphoribosylformylglycinamidine synthase subunit PurL (794 aa).

His-47 is an active-site residue. The ATP site is built by Tyr-50 and Lys-89. Glu-91 lines the Mg(2+) pocket. Substrate is bound by residues 92–95 (SHNH) and Arg-114. Catalysis depends on His-93, which acts as the Proton acceptor. Asp-115 provides a ligand contact to Mg(2+). Gln-238 provides a ligand contact to substrate. Asp-266 contributes to the Mg(2+) binding site. 310 to 312 (ESQ) serves as a coordination point for substrate. The ATP site is built by Asp-522 and Gly-559. Asn-560 lines the Mg(2+) pocket. Substrate is bound at residue Ser-562.

The protein belongs to the FGAMS family. As to quaternary structure, monomer. Part of the FGAM synthase complex composed of 1 PurL, 1 PurQ and 2 PurS subunits.

Its subcellular location is the cytoplasm. The enzyme catalyses N(2)-formyl-N(1)-(5-phospho-beta-D-ribosyl)glycinamide + L-glutamine + ATP + H2O = 2-formamido-N(1)-(5-O-phospho-beta-D-ribosyl)acetamidine + L-glutamate + ADP + phosphate + H(+). The protein operates within purine metabolism; IMP biosynthesis via de novo pathway; 5-amino-1-(5-phospho-D-ribosyl)imidazole from N(2)-formyl-N(1)-(5-phospho-D-ribosyl)glycinamide: step 1/2. Functionally, part of the phosphoribosylformylglycinamidine synthase complex involved in the purines biosynthetic pathway. Catalyzes the ATP-dependent conversion of formylglycinamide ribonucleotide (FGAR) and glutamine to yield formylglycinamidine ribonucleotide (FGAM) and glutamate. The FGAM synthase complex is composed of three subunits. PurQ produces an ammonia molecule by converting glutamine to glutamate. PurL transfers the ammonia molecule to FGAR to form FGAM in an ATP-dependent manner. PurS interacts with PurQ and PurL and is thought to assist in the transfer of the ammonia molecule from PurQ to PurL. The polypeptide is Phosphoribosylformylglycinamidine synthase subunit PurL (Prochlorococcus marinus (strain MIT 9313)).